Consider the following 422-residue polypeptide: UDP-N-acetylglucosamine 1-carboxyvinyltransferase (422 aa).

Residue 22–23 coordinates phosphoenolpyruvate; it reads KN. Residue R93 coordinates UDP-N-acetyl-alpha-D-glucosamine. The active-site Proton donor is C117. C117 is subject to 2-(S-cysteinyl)pyruvic acid O-phosphothioketal. UDP-N-acetyl-alpha-D-glucosamine-binding positions include 122-126, D305, and I327; that span reads RPVDQ.

It belongs to the EPSP synthase family. MurA subfamily.

It localises to the cytoplasm. It carries out the reaction phosphoenolpyruvate + UDP-N-acetyl-alpha-D-glucosamine = UDP-N-acetyl-3-O-(1-carboxyvinyl)-alpha-D-glucosamine + phosphate. Its pathway is cell wall biogenesis; peptidoglycan biosynthesis. Its function is as follows. Cell wall formation. Adds enolpyruvyl to UDP-N-acetylglucosamine. In Bordetella bronchiseptica (strain ATCC BAA-588 / NCTC 13252 / RB50) (Alcaligenes bronchisepticus), this protein is UDP-N-acetylglucosamine 1-carboxyvinyltransferase.